The primary structure comprises 211 residues: Lysozyme g (211 aa).

An N-terminal signal peptide occupies residues 1-26; the sequence is MLGKNDPMCLVLVLLGLTALLGICQG. Cystine bridges form between Cys-30-Cys-86 and Cys-44-Cys-55. Active-site residues include Glu-99 and Asp-112.

The protein belongs to the glycosyl hydrolase 23 family. As to expression, granulocyte compartment of myelomonocytic cells.

Its subcellular location is the secreted. It catalyses the reaction Hydrolysis of (1-&gt;4)-beta-linkages between N-acetylmuramic acid and N-acetyl-D-glucosamine residues in a peptidoglycan and between N-acetyl-D-glucosamine residues in chitodextrins.. In Gallus gallus (Chicken), this protein is Lysozyme g.